Here is a 329-residue protein sequence, read N- to C-terminus: 4-hydroxythreonine-4-phosphate dehydrogenase (329 aa).

His-136 and Thr-137 together coordinate substrate. Residues His-166, His-211, and His-266 each coordinate a divalent metal cation. Positions 274, 283, and 292 each coordinate substrate.

This sequence belongs to the PdxA family. Homodimer. It depends on Zn(2+) as a cofactor. Mg(2+) is required as a cofactor. The cofactor is Co(2+).

It is found in the cytoplasm. The catalysed reaction is 4-(phosphooxy)-L-threonine + NAD(+) = 3-amino-2-oxopropyl phosphate + CO2 + NADH. It participates in cofactor biosynthesis; pyridoxine 5'-phosphate biosynthesis; pyridoxine 5'-phosphate from D-erythrose 4-phosphate: step 4/5. In terms of biological role, catalyzes the NAD(P)-dependent oxidation of 4-(phosphooxy)-L-threonine (HTP) into 2-amino-3-oxo-4-(phosphooxy)butyric acid which spontaneously decarboxylates to form 3-amino-2-oxopropyl phosphate (AHAP). The sequence is that of 4-hydroxythreonine-4-phosphate dehydrogenase from Salmonella typhi.